The following is a 334-amino-acid chain: MSSAELEVLEYLNGHKDEVKGLKIVRVSGREILYSSSRDKKVFSWDLHSKIDSEFGKILKLYDGGHSKRINGLDVSKDGNMMVTVGSDGIGRIWDTESKKSILLEGHGRDVLCVSINSNDTKIVTGSVDRTMNLYNTKGDLVLKMGRDMEMMHRGWINCVTFHPTEESILASGSADGTVKIWDLDTQEHLQTYLGGAYVDYEKAKEKKTSPVDYDESKSVTAMAFSKDGSILTYGEKSGKMYLVKVDSKECIQSFDAIVPVRSIAVGETEPVIALGTDESVIIWETISSRVIASYNLKEIGNGVRCLSLAFSGSTLYCGLSTGAIVPLELRKSD.

WD repeat units lie at residues 14–55 (GHKD…DSEF), 65–104 (GHSK…SILL), 106–145 (GHGR…VLKM), 152–192 (MHRG…HLQT), 215–256 (DESK…QSFD), and 257–294 (AIVP…VIAS).

It belongs to the WD repeat G protein beta family.

This Encephalitozoon cuniculi (strain GB-M1) (Microsporidian parasite) protein is Guanine nucleotide-binding protein subunit beta-like protein.